Here is a 518-residue protein sequence, read N- to C-terminus: Ell-associated factor Eaf (518 aa).

Polar residues-rich tracts occupy residues 119 to 128 (KTRSEMTNKP) and 163 to 182 (ENSTMRITSKTKVSTGSRRN). Disordered regions lie at residues 119–216 (KTRS…PAWH) and 241–518 (ALHN…DDDD). A Phosphoserine modification is found at Ser-192. 2 stretches are compositionally biased toward polar residues: residues 253–265 (ANISGSSTGSSVG) and 274–284 (MGKQRQASSQG). A compositionally biased stretch (low complexity) spans 289–342 (QQQTQRSSPPMQQQQQQQNYGRGGANNNYAQQLHQQQQQQQQQQLQQQQQQMQQ). Polar residues predominate over residues 343–355 (RASFSHSNHSNSM). The span at 368 to 377 (AAQSMAQAAA) shows a compositional bias: low complexity. A compositionally biased stretch (acidic residues) spans 397 to 412 (ESSDSDSGSDSDDSTE). Composition is skewed to low complexity over residues 418–428 (HQQQQPPGQLS), 463–476 (QQQQQQHQQQQQQQ), and 500–518 (NDLLQNDLQLSSNSSDDDD).

Belongs to the EAF family.

Its subcellular location is the nucleus. Its function is as follows. Promotes transcriptional elongation by Su(Tpl)/ELL. Essential for development. The protein is Ell-associated factor Eaf of Drosophila mojavensis (Fruit fly).